The sequence spans 332 residues: Endonuclease 8-like 2 (332 aa).

Pro-2 (schiff-base intermediate with DNA) is an active-site residue. Glu-3 functions as the Proton donor in the catalytic mechanism. Catalysis depends on Lys-50, which acts as the Proton donor; for beta-elimination activity. Residue Lys-50 is modified to N6-acetyllysine. The segment at 56 to 121 is disordered; that stretch reads FDPDEEMGPP…EDDSEYLERD (66 aa). The residue at position 68 (Ser-68) is a Phosphoserine. Over residues 74–84 the composition is skewed to basic and acidic residues; it reads PQKEAQKEGAA. The segment covering 94–105 has biased composition (polar residues); it reads GQKTPDGSSQSA. An N6-acetyllysine modification is found at Lys-154. Asn-231 is a DNA binding site. The segment at 284-320 adopts an FPG-type zinc-finger fold; it reads QVYQREQCPAGHQVMKEAFGPQDGLQRLTWWCPQCQP. Arg-310 serves as the catalytic Proton donor; for delta-elimination activity.

Belongs to the FPG family. As to quaternary structure, binds EP300.

The protein resides in the nucleus. The catalysed reaction is 2'-deoxyribonucleotide-(2'-deoxyribose 5'-phosphate)-2'-deoxyribonucleotide-DNA = a 3'-end 2'-deoxyribonucleotide-(2,3-dehydro-2,3-deoxyribose 5'-phosphate)-DNA + a 5'-end 5'-phospho-2'-deoxyribonucleoside-DNA + H(+). With respect to regulation, acetylation of Lys-50 leads to loss of DNA nicking activity. In terms of biological role, involved in base excision repair of DNA damaged by oxidation or by mutagenic agents. Has DNA glycosylase activity towards 5-hydroxyuracil and other oxidized derivatives of cytosine with a preference for mismatched double-stranded DNA (DNA bubbles). Has low or no DNA glycosylase activity towards thymine glycol, 2-hydroxyadenine, hypoxanthine and 8-oxoguanine. Has AP (apurinic/apyrimidinic) lyase activity and introduces nicks in the DNA strand. Cleaves the DNA backbone by beta-delta elimination to generate a single-strand break at the site of the removed base with both 3'- and 5'-phosphates. This chain is Endonuclease 8-like 2 (NEIL2), found in Pongo abelii (Sumatran orangutan).